We begin with the raw amino-acid sequence, 320 residues long: Mitochondrial ribosome-associated GTPase 1 (320 aa).

The CP-type G domain maps to 37–209; the sequence is LKQMRASPRK…LLDTPGVLPP (173 aa). Residues 81–84, 153–158, and Gly-205 contribute to the GTP site; these read NKMD and NVGKSS.

This sequence belongs to the TRAFAC class YlqF/YawG GTPase family. MTG1 subfamily.

The protein resides in the mitochondrion inner membrane. Functionally, plays a role in the regulation of the mitochondrial ribosome assembly and of translational activity. Displays mitochondrial GTPase activity. This Ictalurus punctatus (Channel catfish) protein is Mitochondrial ribosome-associated GTPase 1.